Consider the following 496-residue polypeptide: Xylulose kinase (496 aa).

83–84 contributes to the substrate binding site; the sequence is MH. Aspartate 237 (proton acceptor) is an active-site residue.

This sequence belongs to the FGGY kinase family.

The enzyme catalyses D-xylulose + ATP = D-xylulose 5-phosphate + ADP + H(+). Its function is as follows. Catalyzes the phosphorylation of D-xylulose to D-xylulose 5-phosphate. In Staphylococcus epidermidis (strain ATCC 12228 / FDA PCI 1200), this protein is Xylulose kinase.